Here is a 581-residue protein sequence, read N- to C-terminus: Arginine--tRNA ligase (581 aa).

The short motif at 122–132 (PNVAKPMHVGH) is the 'HIGH' region element.

Belongs to the class-I aminoacyl-tRNA synthetase family. As to quaternary structure, monomer.

The protein localises to the cytoplasm. It catalyses the reaction tRNA(Arg) + L-arginine + ATP = L-arginyl-tRNA(Arg) + AMP + diphosphate. This Francisella tularensis subsp. holarctica (strain FTNF002-00 / FTA) protein is Arginine--tRNA ligase.